We begin with the raw amino-acid sequence, 98 residues long: NADH-ubiquinone oxidoreductase chain 4L (98 aa).

The next 3 helical transmembrane spans lie at 2–22 (PSIF…MLIF), 37–57 (MLSM…TMSF), and 61–81 (ILLL…LVTV).

The protein belongs to the complex I subunit 4L family. Core subunit of respiratory chain NADH dehydrogenase (Complex I) which is composed of 45 different subunits.

It is found in the mitochondrion inner membrane. It catalyses the reaction a ubiquinone + NADH + 5 H(+)(in) = a ubiquinol + NAD(+) + 4 H(+)(out). Functionally, core subunit of the mitochondrial membrane respiratory chain NADH dehydrogenase (Complex I) which catalyzes electron transfer from NADH through the respiratory chain, using ubiquinone as an electron acceptor. Part of the enzyme membrane arm which is embedded in the lipid bilayer and involved in proton translocation. This chain is NADH-ubiquinone oxidoreductase chain 4L (MT-ND4L), found in Varecia rubra (Red ruffed lemur).